We begin with the raw amino-acid sequence, 173 residues long: CASP-like protein 3A1 (173 aa).

Residue M1 is a topological domain, cytoplasmic. The helical transmembrane segment at 2–22 (VDIALRSAVVAFMVVSLSAMF) threads the bilayer. Residues 23 to 48 (TSTQHSEVHIIGFSIPVSLRWNRSQP) are Extracellular-facing. The N-linked (GlcNAc...) asparagine glycan is linked to N44. A helical transmembrane segment spans residues 49-69 (FEFLVVVELLICAYAFVQFVY). The Cytoplasmic segment spans residues 70-84 (QSVVLAKNAVPTRRC). The chain crosses the membrane as a helical span at residues 85 to 105 (IWVQLAADQVCAYLVLAAAAA). At 106–140 (AAGASRTNKSGFQSLGMQNIKVPGVCIVLDKFCNR) the chain is on the extracellular side. N113 carries N-linked (GlcNAc...) asparagine glycosylation. The helical transmembrane segment at 141-161 (ATIAIIFTLLAAGASGISVTL) threads the bilayer. At 162–173 (DVYMLTLTYYMG) the chain is on the cytoplasmic side.

It belongs to the Casparian strip membrane proteins (CASP) family. Homodimer and heterodimers.

The protein localises to the cell membrane. In Pteridium aquilinum subsp. aquilinum (Bracken fern), this protein is CASP-like protein 3A1.